The primary structure comprises 1148 residues: Alpha-mannosidase 2 (1148 aa).

Residues 1 to 5 (MKLSR) lie on the Cytoplasmic side of the membrane. The helical; Signal-anchor for type II membrane protein transmembrane segment at 6 to 26 (QFTVFGSAIFCVVIFSLYLML) threads the bilayer. Over 27–1148 (DRGHLDYPRG…EISTSRIRLR (1122 aa)) the chain is Lumenal. 2 positions are modified to phosphoserine: S80 and S82. An N-linked (GlcNAc...) asparagine glycan is attached at N93. Zn(2+) is bound by residues H174, D176, D288, and H568. D288 functions as the Nucleophile in the catalytic mechanism. The disordered stretch occupies residues 1121 to 1148 (MHSPPDAQNTSEVSLSPMEISTSRIRLR).

Belongs to the glycosyl hydrolase 38 family. In terms of assembly, homodimer; disulfide-linked. It depends on Zn(2+) as a cofactor. In terms of processing, glycosylated. As to expression, liver.

It localises to the golgi apparatus membrane. It catalyses the reaction N(4)-{beta-D-GlcNAc-(1-&gt;2)-alpha-D-Man-(1-&gt;3)-[alpha-D-Man-(1-&gt;3)-[alpha-D-Man-(1-&gt;6)]-alpha-D-Man-(1-&gt;6)]-beta-D-Man-(1-&gt;4)-beta-D-GlcNAc-(1-&gt;4)-beta-D-GlcNAc}-L-asparaginyl-[protein] + 2 H2O = 2 alpha-D-mannopyranose + an N(4)-{beta-D-GlcNAc-(1-&gt;2)-alpha-D-Man-(1-&gt;3)-[alpha-D-Man-(1-&gt;6)]-beta-D-Man-(1-&gt;4)-beta-D-GlcNAc-(1-&gt;4)-beta-D-GlcNAc}-L-asparaginyl-[protein]. It participates in protein modification; protein glycosylation. Inhibited by swainsonine. Functionally, catalyzes the first committed step in the biosynthesis of complex N-glycans. It controls conversion of high mannose to complex N-glycans; the final hydrolytic step in the N-glycan maturation pathway. The sequence is that of Alpha-mannosidase 2 (Man2a1) from Rattus norvegicus (Rat).